A 252-amino-acid chain; its full sequence is Serine/threonine phosphatase stp (252 aa).

Positions 1 to 22 (MHAEFRTDRGRIRHHNEDNGGV) are disordered. One can recognise a PPM-type phosphatase domain in the interval 2-242 (HAEFRTDRGR…DNITVLLVER (241 aa)). Aspartate 36, glycine 37, aspartate 194, and aspartate 233 together coordinate Mn(2+).

The protein belongs to the PP2C family. The cofactor is Mn(2+).

Its subcellular location is the cytoplasm. The protein resides in the membrane. It catalyses the reaction O-phospho-L-seryl-[protein] + H2O = L-seryl-[protein] + phosphate. The catalysed reaction is O-phospho-L-threonyl-[protein] + H2O = L-threonyl-[protein] + phosphate. In terms of biological role, protein phosphatase that dephosphorylates EF-Tu. This chain is Serine/threonine phosphatase stp (stp), found in Listeria innocua serovar 6a (strain ATCC BAA-680 / CLIP 11262).